A 101-amino-acid polypeptide reads, in one-letter code: Large ribosomal subunit protein uL24 (101 aa).

Belongs to the universal ribosomal protein uL24 family. Part of the 50S ribosomal subunit.

In terms of biological role, one of two assembly initiator proteins, it binds directly to the 5'-end of the 23S rRNA, where it nucleates assembly of the 50S subunit. One of the proteins that surrounds the polypeptide exit tunnel on the outside of the subunit. The protein is Large ribosomal subunit protein uL24 of Ruegeria sp. (strain TM1040) (Silicibacter sp.).